We begin with the raw amino-acid sequence, 103 residues long: Pyrimidine/purine nucleoside phosphorylase (103 aa).

The protein belongs to the nucleoside phosphorylase PpnP family.

It catalyses the reaction a purine D-ribonucleoside + phosphate = a purine nucleobase + alpha-D-ribose 1-phosphate. It carries out the reaction adenosine + phosphate = alpha-D-ribose 1-phosphate + adenine. The catalysed reaction is cytidine + phosphate = cytosine + alpha-D-ribose 1-phosphate. The enzyme catalyses guanosine + phosphate = alpha-D-ribose 1-phosphate + guanine. It catalyses the reaction inosine + phosphate = alpha-D-ribose 1-phosphate + hypoxanthine. It carries out the reaction thymidine + phosphate = 2-deoxy-alpha-D-ribose 1-phosphate + thymine. The catalysed reaction is uridine + phosphate = alpha-D-ribose 1-phosphate + uracil. The enzyme catalyses xanthosine + phosphate = alpha-D-ribose 1-phosphate + xanthine. Functionally, catalyzes the phosphorolysis of diverse nucleosides, yielding D-ribose 1-phosphate and the respective free bases. Can use uridine, adenosine, guanosine, cytidine, thymidine, inosine and xanthosine as substrates. Also catalyzes the reverse reactions. The sequence is that of Pyrimidine/purine nucleoside phosphorylase from Geobacter sp. (strain M21).